Reading from the N-terminus, the 165-residue chain is Phosphopantetheine adenylyltransferase (165 aa).

A substrate-binding site is contributed by T9. ATP-binding positions include 9–10 and H17; that span reads TF. Positions 41, 73, and 87 each coordinate substrate. Residues 88–90, E98, and 123–129 contribute to the ATP site; these read GLR and LQPIASR.

This sequence belongs to the bacterial CoaD family. In terms of assembly, homohexamer. Mg(2+) serves as cofactor.

Its subcellular location is the cytoplasm. It carries out the reaction (R)-4'-phosphopantetheine + ATP + H(+) = 3'-dephospho-CoA + diphosphate. The protein operates within cofactor biosynthesis; coenzyme A biosynthesis; CoA from (R)-pantothenate: step 4/5. In terms of biological role, reversibly transfers an adenylyl group from ATP to 4'-phosphopantetheine, yielding dephospho-CoA (dPCoA) and pyrophosphate. The polypeptide is Phosphopantetheine adenylyltransferase (Rhizorhabdus wittichii (strain DSM 6014 / CCUG 31198 / JCM 15750 / NBRC 105917 / EY 4224 / RW1) (Sphingomonas wittichii)).